A 273-amino-acid chain; its full sequence is Formamidopyrimidine-DNA glycosylase (273 aa).

The Schiff-base intermediate with DNA role is filled by Pro-2. The active-site Proton donor is Glu-3. Residue Lys-58 is the Proton donor; for beta-elimination activity of the active site. DNA contacts are provided by His-92, Arg-111, and Lys-153. Residues Met-238–Lys-272 form an FPG-type zinc finger. Arg-262 acts as the Proton donor; for delta-elimination activity in catalysis.

It belongs to the FPG family. In terms of assembly, monomer. It depends on Zn(2+) as a cofactor.

It catalyses the reaction Hydrolysis of DNA containing ring-opened 7-methylguanine residues, releasing 2,6-diamino-4-hydroxy-5-(N-methyl)formamidopyrimidine.. It carries out the reaction 2'-deoxyribonucleotide-(2'-deoxyribose 5'-phosphate)-2'-deoxyribonucleotide-DNA = a 3'-end 2'-deoxyribonucleotide-(2,3-dehydro-2,3-deoxyribose 5'-phosphate)-DNA + a 5'-end 5'-phospho-2'-deoxyribonucleoside-DNA + H(+). Involved in base excision repair of DNA damaged by oxidation or by mutagenic agents. Acts as a DNA glycosylase that recognizes and removes damaged bases. Has a preference for oxidized purines, such as 7,8-dihydro-8-oxoguanine (8-oxoG). Has AP (apurinic/apyrimidinic) lyase activity and introduces nicks in the DNA strand. Cleaves the DNA backbone by beta-delta elimination to generate a single-strand break at the site of the removed base with both 3'- and 5'-phosphates. The polypeptide is Formamidopyrimidine-DNA glycosylase (Rickettsia bellii (strain OSU 85-389)).